We begin with the raw amino-acid sequence, 326 residues long: Ras association domain-containing protein 2 (326 aa).

Residues 176–264 (YNHKTSVFTP…SKVFLMEKDQ (89 aa)) enclose the Ras-associating domain. In terms of domain architecture, SARAH spans 272–319 (VAQYIKFEMPVLKSFIQKLQEEEDREVEKLMQKYTVLRLMIRQRLEEI).

As to quaternary structure, interacts directly with activated KRAS in a GTP-dependent manner. Interacts (via SARAH domain) with STK3/MST2 and STK4/MST1. Phosphorylated by STK3/MST2 and STK4/MST1.

The protein resides in the nucleus. The protein localises to the cytoplasm. It localises to the chromosome. It is found in the centromere. Its subcellular location is the kinetochore. Functionally, potential tumor suppressor. Acts as a KRAS-specific effector protein. May promote apoptosis and cell cycle arrest. Stabilizes STK3/MST2 by protecting it from proteasomal degradation. This chain is Ras association domain-containing protein 2 (Rassf2), found in Rattus norvegicus (Rat).